A 488-amino-acid chain; its full sequence is NADH-quinone oxidoreductase subunit N 2 (488 aa).

14 helical membrane-spanning segments follow: residues Phe-18–Ile-38, Leu-45–Pro-65, Pro-81–Ala-101, Ser-110–Ala-130, Leu-135–Leu-155, Tyr-169–Ile-189, Leu-210–Phe-230, Pro-242–Val-262, Leu-274–Val-294, Ser-308–Met-328, Val-331–Leu-351, Ile-375–Phe-395, Trp-412–Val-434, and Phe-458–Ile-478.

The protein belongs to the complex I subunit 2 family. In terms of assembly, NDH-1 is composed of 14 different subunits. Subunits NuoA, H, J, K, L, M, N constitute the membrane sector of the complex.

The protein resides in the cell inner membrane. It catalyses the reaction a quinone + NADH + 5 H(+)(in) = a quinol + NAD(+) + 4 H(+)(out). NDH-1 shuttles electrons from NADH, via FMN and iron-sulfur (Fe-S) centers, to quinones in the respiratory chain. The immediate electron acceptor for the enzyme in this species is believed to be ubiquinone. Couples the redox reaction to proton translocation (for every two electrons transferred, four hydrogen ions are translocated across the cytoplasmic membrane), and thus conserves the redox energy in a proton gradient. The chain is NADH-quinone oxidoreductase subunit N 2 from Aquifex aeolicus (strain VF5).